Consider the following 152-residue polypeptide: MPKRVQVVLNEDILSLGKDGDLVDVAPGYARNFLLPFGKAVPVTPAVMKQVEHRRAKEVERQAALKQEALNFKTALDTIGRFTVKKQVGEDNVLFGTVTNGDVAEAIEESTKKEIDRRDILVPEIHRTGKYTVTVKLHSEVTAEINLEVVSY.

This sequence belongs to the bacterial ribosomal protein bL9 family.

Its function is as follows. Binds to the 23S rRNA. The sequence is that of Large ribosomal subunit protein bL9 from Synechococcus sp. (strain CC9902).